The chain runs to 454 residues: Response regulator PleD (454 aa).

Response regulatory domains are found at residues 4-120 (RILV…RSLT) and 155-269 (RVLI…KTQI). 4 residues coordinate Mg(2+): aspartate 9, aspartate 10, aspartate 53, and methionine 55. The residue at position 53 (aspartate 53) is a 4-aspartylphosphate. A GGDEF domain is found at 319 to 454 (DPVSALLIDI…GRNAVVGKAA (136 aa)). Residues asparagine 335 and aspartate 344 each coordinate substrate. Glutamate 370 (proton acceptor) is an active-site residue.

As to quaternary structure, homodimer. Inactive monomer in solution. Phosphorylated by PleC and DivJ. Phosphorylation stimulates cyclase activity.

The protein localises to the cytoplasm. It catalyses the reaction 2 GTP = 3',3'-c-di-GMP + 2 diphosphate. It participates in purine metabolism; 3',5'-cyclic di-GMP biosynthesis. Its activity is regulated as follows. Allosterically inhibited by the product c-di-GMP. Its function is as follows. Response regulator that is part of a signal transduction pathway controlling cell differentiation in the swarmer-to-stalked cell transition. Functionally, catalyzes the condensation of two GTP molecules to the cyclic dinucleotide di-GMP (c-di-GMP), which acts as a secondary messenger. The chain is Response regulator PleD (pleD) from Caulobacter vibrioides (strain ATCC 19089 / CIP 103742 / CB 15) (Caulobacter crescentus).